Reading from the N-terminus, the 382-residue chain is Succinyl-diaminopimelate desuccinylase (382 aa).

Histidine 73 is a Zn(2+) binding site. The active site involves aspartate 75. Residue aspartate 106 coordinates Zn(2+). The active-site Proton acceptor is the glutamate 140. Positions 141, 169, and 355 each coordinate Zn(2+).

Belongs to the peptidase M20A family. DapE subfamily. In terms of assembly, homodimer. Zn(2+) serves as cofactor. Co(2+) is required as a cofactor.

It carries out the reaction N-succinyl-(2S,6S)-2,6-diaminopimelate + H2O = (2S,6S)-2,6-diaminopimelate + succinate. It participates in amino-acid biosynthesis; L-lysine biosynthesis via DAP pathway; LL-2,6-diaminopimelate from (S)-tetrahydrodipicolinate (succinylase route): step 3/3. Its function is as follows. Catalyzes the hydrolysis of N-succinyl-L,L-diaminopimelic acid (SDAP), forming succinate and LL-2,6-diaminopimelate (DAP), an intermediate involved in the bacterial biosynthesis of lysine and meso-diaminopimelic acid, an essential component of bacterial cell walls. The polypeptide is Succinyl-diaminopimelate desuccinylase (Leptothrix cholodnii (strain ATCC 51168 / LMG 8142 / SP-6) (Leptothrix discophora (strain SP-6))).